The following is a 468-amino-acid chain: Glutamate--tRNA ligase (468 aa).

The short motif at 11 to 21 (PSPTGFIHLGN) is the 'HIGH' region element. Positions 243–247 (KMSKR) match the 'KMSKS' region motif. Residue Lys-246 participates in ATP binding.

This sequence belongs to the class-I aminoacyl-tRNA synthetase family. Glutamate--tRNA ligase type 1 subfamily. Monomer.

The protein localises to the cytoplasm. It carries out the reaction tRNA(Glu) + L-glutamate + ATP = L-glutamyl-tRNA(Glu) + AMP + diphosphate. Functionally, catalyzes the attachment of glutamate to tRNA(Glu) in a two-step reaction: glutamate is first activated by ATP to form Glu-AMP and then transferred to the acceptor end of tRNA(Glu). The sequence is that of Glutamate--tRNA ligase from Delftia acidovorans (strain DSM 14801 / SPH-1).